The chain runs to 484 residues: Putative amidase AmiA2 (484 aa).

Catalysis depends on charge relay system residues Lys-93 and Ser-167. The active-site Acyl-ester intermediate is the Ser-191.

It belongs to the amidase family.

The catalysed reaction is a monocarboxylic acid amide + H2O = a monocarboxylate + NH4(+). This Mycobacterium bovis (strain ATCC BAA-935 / AF2122/97) protein is Putative amidase AmiA2 (amiA2).